Consider the following 248-residue polypeptide: Triosephosphate isomerase (248 aa).

Substrate is bound at residue Asn9 to Lys11. The active-site Electrophile is His94. Catalysis depends on Glu166, which acts as the Proton acceptor. Substrate is bound by residues Gly172, Ser212, and Gly233–Gly234.

This sequence belongs to the triosephosphate isomerase family. In terms of assembly, homodimer.

It localises to the cytoplasm. The enzyme catalyses D-glyceraldehyde 3-phosphate = dihydroxyacetone phosphate. It functions in the pathway carbohydrate biosynthesis; gluconeogenesis. Its pathway is carbohydrate degradation; glycolysis; D-glyceraldehyde 3-phosphate from glycerone phosphate: step 1/1. Functionally, involved in the gluconeogenesis. Catalyzes stereospecifically the conversion of dihydroxyacetone phosphate (DHAP) to D-glyceraldehyde-3-phosphate (G3P). The polypeptide is Triosephosphate isomerase (Clostridium botulinum (strain Okra / Type B1)).